The chain runs to 65 residues: Beta-mammal toxin Tpa2 (65 aa).

The LCN-type CS-alpha/beta domain occupies 2 to 64; sequence KEGYLVGNDG…TWSRATNRCG (63 aa). Disulfide bonds link Cys-12-Cys-63, Cys-16-Cys-38, Cys-24-Cys-44, and Cys-28-Cys-46.

Expressed by the venom gland.

It localises to the secreted. In terms of biological role, beta toxins bind voltage-independently at site-4 of sodium channels (Nav) and shift the voltage of activation toward more negative potentials thereby affecting sodium channel activation and promoting spontaneous and repetitive firing. This toxin is lethal to mice. The protein is Beta-mammal toxin Tpa2 of Tityus pachyurus (Colombian scorpion).